Here is a 156-residue protein sequence, read N- to C-terminus: Deoxyuridine 5'-triphosphate nucleotidohydrolase (156 aa).

This sequence belongs to the dCTP deaminase family. Archaeal dUTPase subfamily. Homotrimer.

It carries out the reaction dUTP + H2O = dUMP + diphosphate + H(+). Its pathway is pyrimidine metabolism; dUMP biosynthesis; dUMP from dCTP (dUTP route): step 2/2. This enzyme is involved in nucleotide metabolism: it produces dUMP, the immediate precursor of thymidine nucleotides and it decreases the intracellular concentration of dUTP so that uracil cannot be incorporated into DNA. In Methanocaldococcus jannaschii (strain ATCC 43067 / DSM 2661 / JAL-1 / JCM 10045 / NBRC 100440) (Methanococcus jannaschii), this protein is Deoxyuridine 5'-triphosphate nucleotidohydrolase.